A 198-amino-acid chain; its full sequence is MYYPEPITKLIDSFSKLPGIGPKTAARLAFFVLNMKEDDVLNFANALVSAKRELSHCSVCGHITDQDPCAICTDTSRDGSLICVVQDPKDVIAMEKMKEFHGKYHVLHGAISPMDGIGPEDINVPDLINRLKDEEVEELILATNPNIEGEATAMYISRLVKPSGIRTTRIAHGLPVGGDLEYADEVTLSKALEGRRDV.

The C4-type zinc finger occupies 57 to 72; that stretch reads CSVCGHITDQDPCAIC. A Toprim domain is found at 80-175; that stretch reads SLICVVQDPK…RTTRIAHGLP (96 aa).

This sequence belongs to the RecR family.

Its function is as follows. May play a role in DNA repair. It seems to be involved in an RecBC-independent recombinational process of DNA repair. It may act with RecF and RecO. This chain is Recombination protein RecR, found in Oceanobacillus iheyensis (strain DSM 14371 / CIP 107618 / JCM 11309 / KCTC 3954 / HTE831).